We begin with the raw amino-acid sequence, 230 residues long: Uracil-DNA glycosylase (230 aa).

The active-site Proton acceptor is the aspartate 65.

The protein belongs to the uracil-DNA glycosylase (UDG) superfamily. UNG family.

It is found in the cytoplasm. The catalysed reaction is Hydrolyzes single-stranded DNA or mismatched double-stranded DNA and polynucleotides, releasing free uracil.. Its function is as follows. Excises uracil residues from the DNA which can arise as a result of misincorporation of dUMP residues by DNA polymerase or due to deamination of cytosine. The sequence is that of Uracil-DNA glycosylase from Pediococcus pentosaceus (strain ATCC 25745 / CCUG 21536 / LMG 10740 / 183-1w).